The following is a 356-amino-acid chain: Staphylococcal superantigen-like 3 (356 aa).

Positions 1 to 30 (MKMRTIAKTSLALGLLTTGAITVTTQSVKA) are cleaved as a signal peptide. Residues 61 to 165 (ATTQAANTRQ…TIKQAQTDMT (105 aa)) form a disordered region. Positions 69–104 (RQERTPKLEKAPNTNEEKTSASKIEKISQPKQEEQK) are enriched in basic and acidic residues. Residues 114-141 (PKQEQSQTTTESTTPKTKVTTPPSTNTP) show a composition bias toward low complexity. Residues 142-164 (QPMQSTKSDTPQSPTIKQAQTDM) are compositionally biased toward polar residues. The interval 228–326 (IDVFIVLEDN…VIKMKNGGKY (99 aa)) is sialyl Lewis X-binding.

Belongs to the staphylococcal/streptococcal toxin family. Interacts with host TLR2 (via its extracellular domain).

The protein localises to the secreted. Its function is as follows. Secreted protein that plays an essential role in immune innate response inhibition by interacting with and inhibiting host TLR2. In turn, bacteria recognition by immune cells is impaired and cytokine production is inhibited. Mechanistically, by interacting with TLR2, blocks ligand binding and thus inhibits activation. Second, by interacting with an already formed TLR2-lipopeptide complex, prevents TLR heterodimerization and downstream signaling. The interaction with host TLR2 does not involve sialyl Lewis X interactions. The chain is Staphylococcal superantigen-like 3 from Staphylococcus aureus (strain NCTC 8325 / PS 47).